The following is a 202-amino-acid chain: MATLIYVDKENGEPGTRVAAKDGLKLGSGPSIKALDGRSQVSTPRFGKTFDAPPALPKATRKALGTVNRATEKSVKTKGPLKQKQPSFSAKKMTEKTVKAKSSVPASDDAYPEIEKFFPFNPLDFESFDLPEEHQIAHLPLSGVPLMILDEERELEKLFQLGXPSPVKMPSPPWESNLLQSPSSILSTLDVELPPVCCDIDI.

The segment at 1-92 (MATLIYVDKE…QKQPSFSAKK (92 aa)) is disordered. A2 carries the post-translational modification N-acetylalanine. A D-box motif is present at residues 61-64 (RKAL). 2 consecutive short sequence motifs (TEK-box) follow at residues 71–73 (TEK) and 94–96 (TEK). The SH3-binding signature appears at 163-173 (XPSPVKMPSPP). S165 is modified (phosphoserine; by CDK1).

The protein belongs to the securin family. Interacts with RPS10 and DNAJA1. Interacts with the caspase-like ESPL1, and prevents its protease activity probably by covering its active site. Interacts with TP53 and blocks its activity probably by blocking its binding to DNA. Interacts with the Ku 70 kDa subunit of ds-DNA kinase. Interacts with PTTG1IP. Phosphorylated at Ser-165 by CDK1 during mitosis. In terms of processing, phosphorylated in vitro by ds-DNA kinase. Post-translationally, ubiquitinated through 'Lys-11' linkage of ubiquitin moieties by the anaphase promoting complex (APC) at the onset of anaphase, conducting to its degradation. 'Lys-11'-linked ubiquitination is mediated by the E2 ligase UBE2C/UBCH10.

Its subcellular location is the cytoplasm. The protein resides in the nucleus. In terms of biological role, regulatory protein, which plays a central role in chromosome stability, in the p53/TP53 pathway, and DNA repair. Probably acts by blocking the action of key proteins. During the mitosis, it blocks Separase/ESPL1 function, preventing the proteolysis of the cohesin complex and the subsequent segregation of the chromosomes. At the onset of anaphase, it is ubiquitinated, conducting to its destruction and to the liberation of ESPL1. Its function is however not limited to a blocking activity, since it is required to activate ESPL1. Negatively regulates the transcriptional activity and related apoptosis activity of TP53. The negative regulation of TP53 may explain the strong transforming capability of the protein when it is overexpressed. May also play a role in DNA repair via its interaction with Ku, possibly by connecting DNA damage-response pathways with sister chromatid separation. The polypeptide is Securin (PTTG1) (Pan troglodytes (Chimpanzee)).